We begin with the raw amino-acid sequence, 446 residues long: MNAKEANFDGLVGPTHNYAGLSFGNVASLSNEKSDANPKAAAKQGLRKMKQLADLGFAQGVLPPQERPSLRLLRELGFSGKDADVIAKAAKQAPEMLAAASSASAMWTANAATVSPSADTSDGRVHFTPANLCSKLHRAIEHESTRRTLAAIFADEARFAVHDALPGTPALGDEGAANHTRFCSEYGAPGVEFFVYGRAEYRRGPEPTRFPARQTFEASRAVAQRHGLREEATIYAQQSPDVIDAGVFHNDVIAVGNRDTLFCHERAFVDKQAVYDALTASLGALGARLNVIEVPERAVSVADAVGSYLFNSQLLTREDGRQLLVVPQECRENANVSAYLDALAAGNGPIRDVRVFDLRESMKNGGGPACLRLRVVLNDAERAAVKPNVWIGDALFASLDAWIDKHYRDRLSPADLADPALLEESRTALDELTQILGLGSLYDFQR.

Residues 19–28, asparagine 110, and 137–138 each bind substrate; these read AGLSFGNVAS and HR. Glutamate 174 is a catalytic residue. Arginine 213 provides a ligand contact to substrate. The active site involves histidine 249. Substrate is bound by residues aspartate 251 and asparagine 364. The active-site Nucleophile is the cysteine 370.

This sequence belongs to the succinylarginine dihydrolase family. In terms of assembly, homodimer.

It carries out the reaction N(2)-succinyl-L-arginine + 2 H2O + 2 H(+) = N(2)-succinyl-L-ornithine + 2 NH4(+) + CO2. Its pathway is amino-acid degradation; L-arginine degradation via AST pathway; L-glutamate and succinate from L-arginine: step 2/5. In terms of biological role, catalyzes the hydrolysis of N(2)-succinylarginine into N(2)-succinylornithine, ammonia and CO(2). The protein is N-succinylarginine dihydrolase of Burkholderia thailandensis (strain ATCC 700388 / DSM 13276 / CCUG 48851 / CIP 106301 / E264).